The chain runs to 209 residues: UPF0319 protein VF_1616 (209 aa).

An N-terminal signal peptide occupies residues 1–21 (MKIQSIFAASFCLLSSISAHA).

This sequence belongs to the UPF0319 family.

This Aliivibrio fischeri (strain ATCC 700601 / ES114) (Vibrio fischeri) protein is UPF0319 protein VF_1616.